The primary structure comprises 272 residues: Regulatory protein RecX (272 aa).

It belongs to the RecX family.

Its subcellular location is the cytoplasm. Modulates RecA activity. The sequence is that of Regulatory protein RecX from Staphylococcus saprophyticus subsp. saprophyticus (strain ATCC 15305 / DSM 20229 / NCIMB 8711 / NCTC 7292 / S-41).